The primary structure comprises 492 residues: 5-taurinomethyluridine-[tRNA] synthase subunit GTPB3, mitochondrial (492 aa).

The transit peptide at 1-20 (MWRGLSALVTQAAWAPLRLC) directs the protein to the mitochondrion. Arg-52, Glu-112, and Lys-152 together coordinate 5,10-methylenetetrahydrofolate. A TrmE-type G domain is found at 249 to 416 (GANVVVTGPP…LLQALKTELA (168 aa)). GTP contacts are provided by residues 256–263 (GPPNAGKS), 282–286 (GTTRD), 303–306 (DTAG), and 374–377 (NKSD). K(+) is bound at residue Asn-259. 2 residues coordinate Mg(2+): Ser-263 and Thr-284. A 5,10-methylenetetrahydrofolate-binding site is contributed by Lys-492.

Belongs to the TRAFAC class TrmE-Era-EngA-EngB-Septin-like GTPase superfamily. TrmE GTPase family. As to quaternary structure, homodimer; forms a dimer in the presence of potassium. Interacts with MTO1; forms the GTPBP3-MTO1 complex composed of homodimers of GTPBP3 and MTO1. K(+) is required as a cofactor. Ubiquitously expressed. Highly expressed in tissues with high metabolic rates including heart, liver and brain. Weakly expressed in skeletal muscle.

Its subcellular location is the mitochondrion. The enzyme catalyses GTP + H2O = GDP + phosphate + H(+). In terms of biological role, GTPase component of the GTPBP3-MTO1 complex that catalyzes the 5-taurinomethyluridine (taum(5)U) modification at the 34th wobble position (U34) of mitochondrial tRNAs (mt-tRNAs), which plays a role in mt-tRNA decoding and mitochondrial translation. Taum(5)U formation on mammalian mt-tRNA requires the presence of both GTPBP3-mediated GTPase activity and MTO1 catalytic activity. The chain is 5-taurinomethyluridine-[tRNA] synthase subunit GTPB3, mitochondrial from Mus musculus (Mouse).